We begin with the raw amino-acid sequence, 314 residues long: Olfactory receptor 1E2 (314 aa).

Residues 1–25 (MMGQNQTSISDFLLLGLPIQPEQQN) are Extracellular-facing. Asn5 is a glycosylation site (N-linked (GlcNAc...) asparagine). A helical transmembrane segment spans residues 26-49 (LCYALFLAMYLTTLLGNLLIIVLI). At 50 to 57 (RLDSHLHT) the chain is on the cytoplasmic side. Residues 58–79 (PMYLFLSNLSFSDLCFSSVTIP) traverse the membrane as a helical segment. The Extracellular portion of the chain corresponds to 80-100 (KLLQNMQNQDPSIPYADCLTQ). A disulfide bond links Cys97 and Cys189. Residues 101–120 (MHFFLLFGDLESFLLVAMAY) traverse the membrane as a helical segment. Residues 121 to 139 (DRYVAICFPLHYTAIMSPM) are Cytoplasmic-facing. A helical transmembrane segment spans residues 140–158 (LCLSVVALSWVLTTFHAML). Residues 159-196 (HTLLMARLCFCADNVIPHFFCDMSALLKLACSDTRVNE) lie on the Extracellular side of the membrane. The helical transmembrane segment at 197–219 (WVIFIMGGLIVVIPFLLILGSYA) threads the bilayer. Residues 220–236 (RIVSSILKVPSFKGICK) lie on the Cytoplasmic side of the membrane. The chain crosses the membrane as a helical span at residues 237–260 (ALSTCGSHLSVVSLFYGTVIGLYL). Topologically, residues 261–272 (CPSANSSTLKDT) are extracellular. Asn265 carries N-linked (GlcNAc...) asparagine glycosylation. The helical transmembrane segment at 273 to 292 (VMAMMYTVVTPMLNPFIYSL) threads the bilayer. Over 293 to 314 (RNRDMKGALERVICKRKNPFLL) the chain is Cytoplasmic.

It belongs to the G-protein coupled receptor 1 family.

Its subcellular location is the cell membrane. Odorant receptor. The sequence is that of Olfactory receptor 1E2 (OR1E2) from Pan troglodytes (Chimpanzee).